The primary structure comprises 446 residues: Probable glycine dehydrogenase (decarboxylating) subunit 1 (446 aa).

It belongs to the GcvP family. N-terminal subunit subfamily. The glycine cleavage system is composed of four proteins: P, T, L and H. In this organism, the P 'protein' is a heterodimer of two subunits.

It carries out the reaction N(6)-[(R)-lipoyl]-L-lysyl-[glycine-cleavage complex H protein] + glycine + H(+) = N(6)-[(R)-S(8)-aminomethyldihydrolipoyl]-L-lysyl-[glycine-cleavage complex H protein] + CO2. Functionally, the glycine cleavage system catalyzes the degradation of glycine. The P protein binds the alpha-amino group of glycine through its pyridoxal phosphate cofactor; CO(2) is released and the remaining methylamine moiety is then transferred to the lipoamide cofactor of the H protein. This Desulforamulus reducens (strain ATCC BAA-1160 / DSM 100696 / MI-1) (Desulfotomaculum reducens) protein is Probable glycine dehydrogenase (decarboxylating) subunit 1.